The sequence spans 309 residues: Homoserine O-succinyltransferase (309 aa).

Residue Cys-142 is the Acyl-thioester intermediate of the active site. 2 residues coordinate substrate: Lys-163 and Ser-192. His-235 acts as the Proton acceptor in catalysis. Residue Glu-237 is part of the active site. Arg-249 is a binding site for substrate.

The protein belongs to the MetA family. In terms of assembly, homodimer.

The protein localises to the cytoplasm. It carries out the reaction L-homoserine + succinyl-CoA = O-succinyl-L-homoserine + CoA. It functions in the pathway amino-acid biosynthesis; L-methionine biosynthesis via de novo pathway; O-succinyl-L-homoserine from L-homoserine: step 1/1. Transfers a succinyl group from succinyl-CoA to L-homoserine, forming succinyl-L-homoserine. This Escherichia coli (strain K12 / MC4100 / BW2952) protein is Homoserine O-succinyltransferase.